The sequence spans 293 residues: MAAITASMVAELRAKTDAPMMECKKALTEADGDMARAEELLRVKLGNKASKAASRVTAEGVVASFIGGNAGSLVELNCETDFVSKNDDFLAFSKKVAELVATQNPADVAALSALPLDGSTVDAVRLALVGKIGENLSIRRFVRFDTANKLAAYLHGTRIGVLVEYTGADEQVGKDVAMHIAAMKPVSLSSEDVPAELIAKERSIAEQKAAESGKPAEIVAKMVDGSVQKYLKEVSLLNQTFVKNDKQTIEQMLKAGNASVQKFALFVVGEGIEKKQDDFAAEVAAQVAAAKQQ.

Residues 80 to 83 (TDFV) are involved in Mg(2+) ion dislocation from EF-Tu.

The protein belongs to the EF-Ts family.

The protein localises to the cytoplasm. In terms of biological role, associates with the EF-Tu.GDP complex and induces the exchange of GDP to GTP. It remains bound to the aminoacyl-tRNA.EF-Tu.GTP complex up to the GTP hydrolysis stage on the ribosome. This Paraburkholderia xenovorans (strain LB400) protein is Elongation factor Ts.